A 129-amino-acid polypeptide reads, in one-letter code: Succinate dehydrogenase cytochrome b556 subunit (129 aa).

At 1–26 (MIRNVKKQRPVNLDLQTIRFPITAIA) the chain is on the cytoplasmic side. Residues 27 to 52 (SILHRVSGVITFVAVGILLWLLGTSL) traverse the membrane as a helical segment. Residues 53–68 (SSPEGFEQASAIMGSF) lie on the Periplasmic side of the membrane. Residues 69–89 (FVKFIMWGILTALAYHVVVGI) traverse the membrane as a helical segment. Residue His84 coordinates heme. The Cytoplasmic segment spans residues 90–108 (RHMMMDFGYLEETFEAGKR). A helical transmembrane segment spans residues 109 to 129 (SAKISFVITVVLSLLAGVLVW).

The protein belongs to the cytochrome b560 family. Part of an enzyme complex containing four subunits: a flavoprotein, an iron-sulfur protein, plus two membrane-anchoring proteins, SdhC and SdhD. The complex can form homotrimers. Heme serves as cofactor.

It is found in the cell inner membrane. It participates in carbohydrate metabolism; tricarboxylic acid cycle. Functionally, membrane-anchoring subunit of succinate dehydrogenase (SDH). The protein is Succinate dehydrogenase cytochrome b556 subunit (sdhC) of Escherichia coli O157:H7.